We begin with the raw amino-acid sequence, 511 residues long: Maturase K (511 aa).

Belongs to the intron maturase 2 family. MatK subfamily.

It is found in the plastid. Its subcellular location is the chloroplast. In terms of biological role, usually encoded in the trnK tRNA gene intron. Probably assists in splicing its own and other chloroplast group II introns. In Oryza nivara (Indian wild rice), this protein is Maturase K.